The sequence spans 245 residues: UPF0246 protein CE1889 (245 aa).

The segment at 1–20 is disordered; the sequence is MLILLPPSETKTPGGAGAPL.

The protein belongs to the UPF0246 family.

The sequence is that of UPF0246 protein CE1889 from Corynebacterium efficiens (strain DSM 44549 / YS-314 / AJ 12310 / JCM 11189 / NBRC 100395).